We begin with the raw amino-acid sequence, 247 residues long: MAIPLLQYKPSSQNQRVPGYEVPNEDTPRIYRLEDAPSYSEIQELIWAAYRQIFSEHEILKFHRQINLESQLKNRTITVRDFIRGLAKSEAFQRLVVETNSNYRIVEISLKRILGRAPYNREEEIAWSIKIATDGFGGFVDALVDSEEYQINFGDNTVPYQRRRFKDRPFNLVTPRYGNYWRDKLENERYIAGDIKNFLDLAKSIEIKTVSYQPVSTANISIPDTTRNTVPRGIPVSVNPSASFPLR.

The PBS-linker domain occupies 11 to 189 (SSQNQRVPGY…YWRDKLENER (179 aa)).

It belongs to the phycobilisome linker protein family. As to quaternary structure, the phycobilisome is a hemidiscoidal structure that is composed of two distinct substructures: a core complex and a number of rods radiating from the core.

The protein localises to the cellular thylakoid membrane. In terms of biological role, rod-core linker protein required for attachment of phycocyanin to allophycocyanin in cores of phycobilisomes. Linker polypeptides determine the state of aggregation and the location of the disk-shaped phycobiliprotein units within the phycobilisome and modulate their spectroscopic properties in order to mediate a directed and optimal energy transfer. The chain is Phycobilisome rod-core linker polypeptide CpcG2 (cpcG2) from Mastigocladus laminosus (Fischerella sp.).